Here is a 190-residue protein sequence, read N- to C-terminus: Thymidylate kinase (190 aa).

7–14 (GVDTCGKS) contributes to the ATP binding site.

It belongs to the thymidylate kinase family.

It catalyses the reaction dTMP + ATP = dTDP + ADP. Functionally, phosphorylation of dTMP to form dTDP in both de novo and salvage pathways of dTTP synthesis. The chain is Thymidylate kinase from Wolinella succinogenes (strain ATCC 29543 / DSM 1740 / CCUG 13145 / JCM 31913 / LMG 7466 / NCTC 11488 / FDC 602W) (Vibrio succinogenes).